The following is an 843-amino-acid chain: Translation initiation factor IF-2 (843 aa).

Residues 198–219 are disordered; it reads YKREEEEKKSKAKKAGGKGFKK. Residues 207–219 show a composition bias toward basic residues; that stretch reads SKAKKAGGKGFKK. The tr-type G domain maps to 345–512; that stretch reads SRAPVVTIMG…AVLLQSEVLE (168 aa). A G1 region spans residues 354 to 361; sequence GHVDHGKT. 354–361 is a GTP binding site; that stretch reads GHVDHGKT. The tract at residues 379-383 is G2; the sequence is GITQH. The interval 400–403 is G3; the sequence is DTPG. GTP is bound by residues 400–404 and 454–457; these read DTPGH and NKID. Positions 454–457 are G4; sequence NKID. Residues 490–492 are G5; it reads SAK.

It belongs to the TRAFAC class translation factor GTPase superfamily. Classic translation factor GTPase family. IF-2 subfamily.

Its subcellular location is the cytoplasm. Functionally, one of the essential components for the initiation of protein synthesis. Protects formylmethionyl-tRNA from spontaneous hydrolysis and promotes its binding to the 30S ribosomal subunits. Also involved in the hydrolysis of GTP during the formation of the 70S ribosomal complex. The polypeptide is Translation initiation factor IF-2 (Francisella tularensis subsp. tularensis (strain WY96-3418)).